Consider the following 367-residue polypeptide: Deoxyhypusine synthase-like protein (367 aa).

A disordered region spans residues 1–23 (MKSLFQRRASKVRETEAMNAPVP).

This sequence belongs to the deoxyhypusine synthase family.

The chain is Deoxyhypusine synthase-like protein from Caulobacter vibrioides (strain ATCC 19089 / CIP 103742 / CB 15) (Caulobacter crescentus).